We begin with the raw amino-acid sequence, 482 residues long: Putative dipeptidase NECHADRAFT_87110 (482 aa).

The segment covering Met-1–Ala-21 has biased composition (polar residues). A disordered region spans residues Met-1 to Glu-24. An N-linked (GlcNAc...) asparagine glycan is attached at Asn-18. Residues Trp-41–Phe-61 form a helical membrane-spanning segment. Zn(2+)-binding residues include His-90, Asp-92, and Glu-201. A disulfide bond links Cys-141 and Cys-230. A substrate-binding site is contributed by His-228. The Zn(2+) site is built by His-272 and His-293. Positions 304 and 364 each coordinate substrate.

It belongs to the metallo-dependent hydrolases superfamily. Peptidase M19 family. Requires Zn(2+) as cofactor.

It is found in the membrane. The catalysed reaction is an L-aminoacyl-L-amino acid + H2O = 2 an L-alpha-amino acid. Functionally, hydrolyzes a wide range of dipeptides. The polypeptide is Putative dipeptidase NECHADRAFT_87110 (Fusarium vanettenii (strain ATCC MYA-4622 / CBS 123669 / FGSC 9596 / NRRL 45880 / 77-13-4) (Fusarium solani subsp. pisi)).